A 276-amino-acid polypeptide reads, in one-letter code: Ribosomal RNA small subunit methyltransferase A (276 aa).

The S-adenosyl-L-methionine site is built by Asn15, Leu17, Gly42, Glu63, Asp88, and Asn111.

Belongs to the class I-like SAM-binding methyltransferase superfamily. rRNA adenine N(6)-methyltransferase family. RsmA subfamily.

The protein resides in the cytoplasm. It catalyses the reaction adenosine(1518)/adenosine(1519) in 16S rRNA + 4 S-adenosyl-L-methionine = N(6)-dimethyladenosine(1518)/N(6)-dimethyladenosine(1519) in 16S rRNA + 4 S-adenosyl-L-homocysteine + 4 H(+). Its function is as follows. Specifically dimethylates two adjacent adenosines (A1518 and A1519) in the loop of a conserved hairpin near the 3'-end of 16S rRNA in the 30S particle. May play a critical role in biogenesis of 30S subunits. The polypeptide is Ribosomal RNA small subunit methyltransferase A (Geobacter sulfurreducens (strain ATCC 51573 / DSM 12127 / PCA)).